Here is a 38-residue protein sequence, read N- to C-terminus: Photosystem II reaction center protein L (38 aa).

Residues 17 to 37 (SLYWGLLLIFVLAILFSSYIF) form a helical membrane-spanning segment.

Belongs to the PsbL family. As to quaternary structure, PSII is composed of 1 copy each of membrane proteins PsbA, PsbB, PsbC, PsbD, PsbE, PsbF, PsbH, PsbI, PsbJ, PsbK, PsbL, PsbM, PsbT, PsbX, PsbY, PsbZ, Psb30/Ycf12, at least 3 peripheral proteins of the oxygen-evolving complex and a large number of cofactors. It forms dimeric complexes.

The protein localises to the plastid. It is found in the chloroplast thylakoid membrane. In terms of biological role, one of the components of the core complex of photosystem II (PSII). PSII is a light-driven water:plastoquinone oxidoreductase that uses light energy to abstract electrons from H(2)O, generating O(2) and a proton gradient subsequently used for ATP formation. It consists of a core antenna complex that captures photons, and an electron transfer chain that converts photonic excitation into a charge separation. This subunit is found at the monomer-monomer interface and is required for correct PSII assembly and/or dimerization. This is Photosystem II reaction center protein L from Nephroselmis olivacea (Green alga).